An 857-amino-acid chain; its full sequence is Leucine--tRNA ligase (857 aa).

The short motif at 42–52 (PYPSGKLHMGH) is the 'HIGH' region element. The short motif at 620 to 624 (KMSKS) is the 'KMSKS' region element. Lys-623 lines the ATP pocket.

This sequence belongs to the class-I aminoacyl-tRNA synthetase family.

The protein resides in the cytoplasm. The catalysed reaction is tRNA(Leu) + L-leucine + ATP = L-leucyl-tRNA(Leu) + AMP + diphosphate. The sequence is that of Leucine--tRNA ligase from Thiobacillus denitrificans (strain ATCC 25259 / T1).